The chain runs to 335 residues: Probable peptide ABC transporter ATP-binding protein y4tR (335 aa).

The region spanning 15 to 264 (VRDLETHFYG…PTHPYTRALM (250 aa)) is the ABC transporter domain. Residue 49–56 (GESGCGKS) coordinates ATP.

It belongs to the ABC transporter superfamily.

The protein resides in the cell inner membrane. Probably part of a binding-protein-dependent transport system y4tOPQRS for a peptide. Probably responsible for energy coupling to the transport system. The chain is Probable peptide ABC transporter ATP-binding protein y4tR from Sinorhizobium fredii (strain NBRC 101917 / NGR234).